The primary structure comprises 337 residues: Glyceraldehyde-3-phosphate dehydrogenase (337 aa).

NAD(+) is bound by residues 13 to 14 (RI), D35, and R80. D-glyceraldehyde 3-phosphate is bound by residues 150–152 (SCT), T181, 210–211 (TG), and R233. Residue C151 is the Nucleophile of the active site. N315 is an NAD(+) binding site.

Belongs to the glyceraldehyde-3-phosphate dehydrogenase family. Homotetramer.

It is found in the cytoplasm. The enzyme catalyses D-glyceraldehyde 3-phosphate + phosphate + NAD(+) = (2R)-3-phospho-glyceroyl phosphate + NADH + H(+). It functions in the pathway carbohydrate degradation; glycolysis; pyruvate from D-glyceraldehyde 3-phosphate: step 1/5. This is Glyceraldehyde-3-phosphate dehydrogenase (GPDA) from Colletotrichum lindemuthianum (Bean anthracnose fungus).